The chain runs to 263 residues: SPRY domain-containing SOCS box protein 2 (263 aa).

Over residues methionine 1 to proline 16 the composition is skewed to polar residues. The tract at residues methionine 1 to tryptophan 48 is disordered. One can recognise a B30.2/SPRY domain in the interval proline 26–arginine 221. In terms of domain architecture, SOCS box spans alanine 222–glutamine 263.

Belongs to the SPSB family. As to quaternary structure, component of the probable ECS(SPSB2) E3 ubiquitin-protein ligase complex which contains CUL5, RNF7/RBX2, Elongin BC complex and SPSB2. Interacts with CUL5, RNF7, ELOB and ELOC. Interacts with MET. Interacts (via B30.2/SPRY domain) with PAWR; this interaction occurs in association with the Elongin BC complex. Interacts with NOS2. (Microbial infection) Interacts (via C-terminus) with HCV envelope glycoprotein E1. Interacts (via C-terminus) with HCV non-structural protein 5A; this interaction targets NS5A for ubiquitination and degradation.

The protein resides in the cytoplasm. Its subcellular location is the cytosol. Its pathway is protein modification; protein ubiquitination. Its function is as follows. Substrate recognition component of a SCF-like ECS (Elongin BC-CUL2/5-SOCS-box protein) E3 ubiquitin-protein ligase complex which mediates the ubiquitination and subsequent proteasomal degradation of target proteins. Negatively regulates nitric oxide (NO) production and limits cellular toxicity in activated macrophages by mediating the ubiquitination and proteasomal degradation of NOS2. Acts as a bridge which links NOS2 with the ECS E3 ubiquitin ligase complex components ELOC and CUL5. In Homo sapiens (Human), this protein is SPRY domain-containing SOCS box protein 2 (SPSB2).